The following is a 543-amino-acid chain: Zinc finger protein tra-4 (543 aa).

The segment at 1–38 is disordered; the sequence is MDDPNQCTIKQEDSITRPRPTEAPTIQNLKQEPAIEEG. Residues 10 to 20 show a composition bias toward basic and acidic residues; sequence KQEDSITRPRP. C2H2-type zinc fingers lie at residues 218–241, 327–350, 381–406, 413–436, 442–464, 470–493, and 495–518; these read VRCKKCKNRFIEKNIYERHLRDKH, PQCPFCDKRFRNEFSLKKHFAKKH, YVCFECTPIRNLCTDNRLLNHRKKFH, FRCSFCNMKFLTPRKLRKHKKMSH, FQCHFCEEIFISEVAVMTHERMH, FECKVCDFRANRYTAMEEHKRDEH, and YVCAICHERHAEYPEMKHHVYEEH.

This sequence belongs to the krueppel C2H2-type zinc-finger protein family. As to quaternary structure, interacts with histone deacetylase hda-1. May interact with nasp-1.

It is found in the nucleus. Its function is as follows. Probable transcription factor. Promotes normal hermaphrodite (XX) development, in concert with histone deacetylase hda-1 and nasp-1, perhaps as components of a complex. May cooperate with transcription factor tra-1 to repress male-specific genes in hermaphrodites. Synthetic multivulva (synMuv) class B protein, required to repress the induction of vulval development by let-60 Ras signaling. The polypeptide is Zinc finger protein tra-4 (Caenorhabditis elegans).